Consider the following 510-residue polypeptide: Ferredoxin--nitrite reductase (510 aa).

Residues Cys-396, Cys-402, Cys-437, and Cys-441 each coordinate [4Fe-4S] cluster. Cys-441 contacts siroheme.

Belongs to the nitrite and sulfite reductase 4Fe-4S domain family.

It carries out the reaction 6 oxidized [2Fe-2S]-[ferredoxin] + NH4(+) + 2 H2O = nitrite + 6 reduced [2Fe-2S]-[ferredoxin] + 8 H(+). The chain is Ferredoxin--nitrite reductase (nirA) from Leptolyngbya laminosa (Phormidium laminosum).